Reading from the N-terminus, the 537-residue chain is Synaptotagmin-2 (537 aa).

Topologically, residues 1–2 (MG) are cytoplasmic. Residues 3 to 23 (IISTILGVIGFGFGTTIGIVI) form a helical membrane-spanning segment. Over 24–537 (GYYLFIYFQS…QIELQWRNSS (514 aa)) the chain is Lumenal. Residues 67 to 249 (DFDRIDWLNK…WPKTLNVQIM (183 aa)) enclose the SMP-LTD domain. The phospholipid binding stretch occupies residues 227–505 (QEIIKDQVAN…TLGYVVINLG (279 aa)). C2 domains are found at residues 240-362 (WPKT…LMTL) and 402-517 (DPNA…NDKY). Residues D276, D282, D332, and E334 each coordinate Ca(2+).

This sequence belongs to the synaptotagmin family. Requires Ca(2+) as cofactor.

It is found in the golgi apparatus membrane. Functionally, may play an important role in regulating an unconventional protein trafficking from the cytosol to the extracellular matrix. The sequence is that of Synaptotagmin-2 (SYT2) from Arabidopsis thaliana (Mouse-ear cress).